The following is a 501-amino-acid chain: Ribose import ATP-binding protein RbsA (501 aa).

2 consecutive ABC transporter domains span residues 5 to 241 and 252 to 498; these read LSLE…VGRK and LRND…TGGV. Residue 37–44 participates in ATP binding; the sequence is GENGAGKS.

This sequence belongs to the ABC transporter superfamily. Ribose importer (TC 3.A.1.2.1) family. The complex is composed of an ATP-binding protein (RbsA), two transmembrane proteins (RbsC) and a solute-binding protein (RbsB).

The protein localises to the cell inner membrane. The enzyme catalyses D-ribose(out) + ATP + H2O = D-ribose(in) + ADP + phosphate + H(+). Functionally, part of the ABC transporter complex RbsABC involved in ribose import. Responsible for energy coupling to the transport system. In Hahella chejuensis (strain KCTC 2396), this protein is Ribose import ATP-binding protein RbsA.